We begin with the raw amino-acid sequence, 157 residues long: Large ribosomal subunit protein uL15 (157 aa).

The segment at 1–64 (MKLNEIPAVP…MPLQRRLPKR (64 aa)) is disordered. Residues 21 to 31 (RGPGSGNGKTA) show a composition bias toward gly residues.

It belongs to the universal ribosomal protein uL15 family. In terms of assembly, part of the 50S ribosomal subunit.

In terms of biological role, binds to the 23S rRNA. In Magnetococcus marinus (strain ATCC BAA-1437 / JCM 17883 / MC-1), this protein is Large ribosomal subunit protein uL15.